The chain runs to 461 residues: uncharacterized protein (461 aa).

Transmembrane regions (helical) follow at residues 18-38 (IITW…FLIY) and 124-144 (FIFL…ILSI). 2 PLD phosphodiesterase domains span residues 197 to 224 (YNYR…ADEY) and 374 to 401 (TPGF…DYRS).

The protein belongs to the phospholipase D family. Cardiolipin synthase subfamily.

It is found in the cell membrane. This is an uncharacterized protein from Streptococcus mutans serotype c (strain ATCC 700610 / UA159).